The chain runs to 358 residues: 3-isopropylmalate dehydrogenase (358 aa).

Residues R92, R102, R130, and D224 each contribute to the substrate site. Residues D224, D248, and D252 each coordinate Mg(2+). An NAD(+)-binding site is contributed by 282 to 294 (GSAPDIAGQGIAN).

Belongs to the isocitrate and isopropylmalate dehydrogenases family. LeuB type 1 subfamily. As to quaternary structure, homodimer. The cofactor is Mg(2+). Mn(2+) is required as a cofactor.

The protein localises to the cytoplasm. It carries out the reaction (2R,3S)-3-isopropylmalate + NAD(+) = 4-methyl-2-oxopentanoate + CO2 + NADH. It functions in the pathway amino-acid biosynthesis; L-leucine biosynthesis; L-leucine from 3-methyl-2-oxobutanoate: step 3/4. Catalyzes the oxidation of 3-carboxy-2-hydroxy-4-methylpentanoate (3-isopropylmalate) to 3-carboxy-4-methyl-2-oxopentanoate. The product decarboxylates to 4-methyl-2 oxopentanoate. In Bordetella parapertussis (strain 12822 / ATCC BAA-587 / NCTC 13253), this protein is 3-isopropylmalate dehydrogenase.